The following is a 495-amino-acid chain: RuBisCO large subunit-binding protein subunit alpha (495 aa).

The protein belongs to the chaperonin (HSP60) family. As to quaternary structure, oligomer of probably six alpha and six beta subunits.

It is found in the plastid. It localises to the chloroplast. This protein binds RuBisCO small and large subunits and is implicated in the assembly of the enzyme oligomer. The protein is RuBisCO large subunit-binding protein subunit alpha of Ricinus communis (Castor bean).